A 95-amino-acid chain; its full sequence is Acylphosphatase (95 aa).

An Acylphosphatase-like domain is found at 5–93 (RAHLYIKGKV…GEFQDFRILP (89 aa)). Active-site residues include R20 and N38.

The protein belongs to the acylphosphatase family.

The catalysed reaction is an acyl phosphate + H2O = a carboxylate + phosphate + H(+). This Pyrobaculum islandicum (strain DSM 4184 / JCM 9189 / GEO3) protein is Acylphosphatase (acyP).